Consider the following 374-residue polypeptide: Dispase autolysis-inducing protein (374 aa).

The N-terminal stretch at 1-26 is a signal peptide; the sequence is MKRMGWAVTAAVTTIVLAQSSLAAQA.

The protein localises to the secreted. Its function is as follows. Induces autolysis of dispase and thermolysin. The protein is Dispase autolysis-inducing protein (daip) of Streptomyces mobaraensis (Streptoverticillium mobaraense).